A 407-amino-acid chain; its full sequence is Arrestin homolog (407 aa).

Belongs to the arrestin family.

In Locusta migratoria (Migratory locust), this protein is Arrestin homolog.